The primary structure comprises 195 residues: Protein GrpE (195 aa).

A compositionally biased stretch (polar residues) spans 1–24 (MSSKEQNTPDEQVSQESEMEQGQQ). The segment at 1–40 (MSSKEQNTPDEQVSQESEMEQGQQAEAAPETVDVVDPRDE) is disordered.

The protein belongs to the GrpE family. As to quaternary structure, homodimer.

The protein resides in the cytoplasm. Functionally, participates actively in the response to hyperosmotic and heat shock by preventing the aggregation of stress-denatured proteins, in association with DnaK and GrpE. It is the nucleotide exchange factor for DnaK and may function as a thermosensor. Unfolded proteins bind initially to DnaJ; upon interaction with the DnaJ-bound protein, DnaK hydrolyzes its bound ATP, resulting in the formation of a stable complex. GrpE releases ADP from DnaK; ATP binding to DnaK triggers the release of the substrate protein, thus completing the reaction cycle. Several rounds of ATP-dependent interactions between DnaJ, DnaK and GrpE are required for fully efficient folding. The polypeptide is Protein GrpE (Sodalis glossinidius (strain morsitans)).